We begin with the raw amino-acid sequence, 338 residues long: Malate dehydrogenase, mitochondrial (338 aa).

A mitochondrion-targeting transit peptide spans 1-24 (MLSALARPAGAALRRSFSTSAQNN). NAD(+) is bound by residues 31 to 37 (GASGGIG) and aspartate 57. Serine 33 carries an O-linked (GlcNAc) serine glycan. N6-acetyllysine; alternate is present on residues lysine 78 and lysine 91. 2 positions are modified to N6-succinyllysine; alternate: lysine 78 and lysine 91. Substrate is bound by residues arginine 104 and arginine 110. Residues asparagine 117 and 140 to 142 (IAN) each bind NAD(+). A substrate-binding site is contributed by asparagine 142. Lysine 165 is subject to N6-acetyllysine. Residue arginine 176 participates in substrate binding. Residue lysine 185 is modified to N6-acetyllysine; alternate. An N6-succinyllysine; alternate modification is found at lysine 185. The Proton acceptor role is filled by histidine 200. At lysine 203 the chain carries N6-succinyllysine. Lysine 215 and lysine 239 each carry N6-acetyllysine; alternate. Residues lysine 215 and lysine 239 each carry the N6-succinyllysine; alternate modification. Lysine 239 is subject to N6-malonyllysine; alternate. A Phosphoserine modification is found at serine 246. Position 251 (methionine 251) interacts with NAD(+). Lysine 269 bears the N6-succinyllysine mark. N6-acetyllysine; alternate is present on residues lysine 296, lysine 301, and lysine 307. 3 positions are modified to N6-succinyllysine; alternate: lysine 296, lysine 301, and lysine 307. Lysine 307 is modified (N6-malonyllysine; alternate). Residue threonine 309 is modified to Phosphothreonine. N6-acetyllysine; alternate occurs at positions 314 and 324. An N6-succinyllysine; alternate mark is found at lysine 314 and lysine 324. Serine 326 is modified (phosphoserine). An N6-acetyllysine; alternate mark is found at lysine 328, lysine 329, and lysine 335. Residue lysine 328 is modified to N6-succinyllysine; alternate. Position 329 is an N6-malonyllysine; alternate (lysine 329). Residue lysine 335 is modified to N6-succinyllysine; alternate.

It belongs to the LDH/MDH superfamily. MDH type 1 family. As to quaternary structure, homodimer. Post-translationally, acetylation is enhanced after treatment either with trichostin A (TCA) or with nicotinamide (NAM) with the appearance of tri- and tetraacetylations. Glucose also increases acetylation. Acetylation of Lys-239 and Lys-314 is observed in liver mitochondria from fasted mice but not from fed mice.

Its subcellular location is the mitochondrion matrix. The enzyme catalyses (S)-malate + NAD(+) = oxaloacetate + NADH + H(+). Enzyme activity is enhanced by acetylation. This chain is Malate dehydrogenase, mitochondrial (Mdh2), found in Mus musculus (Mouse).